Consider the following 638-residue polypeptide: Pentatricopeptide repeat-containing protein At1g59720, chloroplastic/mitochondrial (638 aa).

The N-terminal 40 residues, 1-40 (MVVRSIIVSPPTTITYYHPMSIGLLVHPLSPHIPPASSPS), are a transit peptide targeting the chloroplast and mitochondrion. PPR repeat units lie at residues 82–112 (TLFL…IENH), 113–148 (SSFM…GESS), 150–184 (DKHT…GFGG), 185–215 (DVYV…MPER), 216–246 (SLVS…MQRS), 250–280 (DGYT…LLRK), 288–318 (DVLV…MQKR), 319–353 (DLAS…RENV), 356–390 (NSVT…YCIE), and 392–422 (ALEH…MPMK). Positions 427-510 (IWRSLLDACC…EPGCSSIEIN (84 aa)) are type E motif. The type E(+) motif stretch occupies residues 511–541 (GISHEFFAGDTSHPQTKQIYQQLKVIDDRLR). Residues 542 to 638 (SIGYLPDRSQ…DGSCSCLDYW (97 aa)) are type DYW motif.

It belongs to the PPR family. PCMP-H subfamily. In terms of assembly, interacts with ORRM1. Interacts with VAR3/OZ1.

It is found in the plastid. It localises to the chloroplast. The protein localises to the mitochondrion. Functionally, involved in multiple sites RNA editing events in chloroplasts. Involved in the editing of the site 2 of ndhB (ndhB-2) and site 3 of ndhD (ndhD-3) transcripts, which are two plastid-encoded subunits of the chloroplast NAD(P)H dehydrogenase (NDH) complex. Required for the activity of the NDH complex of the photosynthetic electron transport chain. The sequence is that of Pentatricopeptide repeat-containing protein At1g59720, chloroplastic/mitochondrial (PCMP-H51) from Arabidopsis thaliana (Mouse-ear cress).